The chain runs to 1487 residues: MVQWLAMLQLLWLQQLLLLGIHQGIAQDLTHIQEPSLEWRDKGIFIIQSESLKTCIQAGKSVLTLENCKQPNEHMLWKWVSDDHLFNVGGSGCLGLNISALEQPLKLYECDSTLISLRWHCDRKMIEGPLQYKVQVKSDNTVVARKQIHRWIAYTSSGGDICEHPSRDLYTLKGNAHGMPCVFPFQFKGHWHHDCIREGQKEHLLWCATTSRYEEDEKWGFCPDPTSMKVFCDATWQRNGSSRICYQFNLLSSLSWNQAHSSCLMQGGALLSIADEDEEDFIRKHLSKVVKEVWIGLNQLDEKAGWQWSDGTPLSYLNWSQEITPGPFVEHHCGTLEVVSAAWRSRDCESTLPYICKRDLNHTAQGILEKDSWKYHATHCDPDWTPFNRKCYKLKKDRKSWLGALHSCQSNDSVLMDVASLAEVEFLVSLLRDENASETWIGLSSNKIPVSFEWSSGSSVIFTNWYPLEPRILPNRRQLCVSAEESDGRWKVKDCKERLFYICKKAGQVPADEQSGCPAGWERHGRFCYKIDTVLRSFEEASSGYYCSPALLTITSRFEQAFITSLISSVAEKDSYFWIALQDQNNTGEYTWKTVGQREPVQYTYWNTRQPSNRGGCVVVRGGSSLGRWEVKDCSDFKAMSLCKTPVKIWEKTELEERWPFHPCYMDWESATGLASCFKVFHSEKVLMKRSWREAEAFCEEFGAHLASFAHIEEENFVNELLHSKFNWTQERQFWIGFNRRNPLNAGSWAWSDGSPVVSSFLDNAYFEEDAKNCAVYKANKTLLPSNCASKHEWICRIPRDVRPKFPDWYQYDAPWLFYQNAEYLFHTHPAEWATFEFVCGWLRSDFLTIYSAQEQEFIHSKIKGLTKYGVKWWIGLEEGGARDQIQWSNGSPVIFQNWDKGREERVDSQRKRCVFISSITGLWGTENCSVPLPSICKRVKIWVIEKEKPPTQPGTCPKGWLYFNYKCFLVTIPKDPRELKTWTGAQEFCVAKGGTLVSIKSELEQAFITMNLFGQTTNVWIGLQSTNHEKWVNGKPLVYSNWSPSDIINIPSYNTTEFQKHIPLCALMSSNPNFHFTGKWYFDDCGKEGYGFVCEKMQDTLEHHVNVSDTSAIPSTLEYGNRTYKIIRGNMTWYAAGKSCRMHRAELASIPDAFHQAFLTVLLSRLGHTHWIGLSTTDNGQTFDWSDGTKSPFTYWKDEESAFLGDCAFADTNGRWHSTACESFLQGAICHVVTETKAFEHPGLCSETSVPWIKFKGNCYSFSTVLDSRSFEDAHEFCKSEGSNLLAIRDAAENSFLLEELLAFGSSVQMVWLNAQFDNNNKTLRWFDGTPTEQSNWGLRKPDMDHLKPHPCVVLRIPEGIWHFTPCEDKKGFICKMEAGIPAVTAQPEKGLSHSIVPVTVTLTLIIALGIFMLCFWIYKQKSDIFQRLTGSRGSYYPTLNFSTAHLEENILISDLEKNTNDEEVRDAPATESKRGHKGRPICISP.

Positions 1–26 are cleaved as a signal peptide; it reads MVQWLAMLQLLWLQQLLLLGIHQGIA. Over 27–1396 the chain is Extracellular; it reads QDLTHIQEPS…AQPEKGLSHS (1370 aa). Positions 42–165 constitute a Ricin B-type lectin domain; the sequence is KGIFIIQSES…SSGGDICEHP (124 aa). Intrachain disulfides connect Cys55/Cys68, Cys93/Cys110, Cys181/Cys207, and Cys195/Cys222. Asn97 carries N-linked (GlcNAc...) asparagine glycosylation. One can recognise a Fibronectin type-II domain in the interval 176 to 224; that stretch reads AHGMPCVFPFQFKGHWHHDCIREGQKEHLLWCATTSRYEEDEKWGFCPD. Asn239 carries N-linked (GlcNAc...) asparagine glycosylation. C-type lectin domains are found at residues 241 to 357, 387 to 504, 524 to 643, 673 to 797, 819 to 938, and 964 to 1095; these read SSRI…YICK, FNRK…YICK, HGRF…MSLC, GLAS…WICR, YQNA…SICK, and FNYK…GFVC. 10 disulfide bridges follow: Cys263-Cys356, Cys333-Cys348, Cys408-Cys503, Cys480-Cys495, Cys617-Cys634, Cys699-Cys796, Cys774-Cys788, Cys840-Cys937, Cys914-Cys929, and Cys1066-Cys1086. Asn928 carries N-linked (GlcNAc...) asparagine glycosylation. 3 N-linked (GlcNAc...) asparagine glycosylation sites follow: Asn1107, Asn1122, and Asn1131. C-type lectin domains are found at residues 1120 to 1231 and 1256 to 1377; these read YGNR…GAIC and FKGN…FICK. 3 cysteine pairs are disulfide-bonded: Cys1208/Cys1222, Cys1279/Cys1376, and Cys1353/Cys1368. A helical transmembrane segment spans residues 1397-1417; that stretch reads IVPVTVTLTLIIALGIFMLCF. Residues 1418-1487 are Cytoplasmic-facing; it reads WIYKQKSDIF…HKGRPICISP (70 aa). Residues 1435–1441 carry the Endocytosis signal motif; sequence GSYYPTL. The span at 1463 to 1475 shows a compositional bias: basic and acidic residues; the sequence is DEEVRDAPATESK. The interval 1463–1487 is disordered; that stretch reads DEEVRDAPATESKRGHKGRPICISP.

Interacts with sPLA2-IB/PLA2G1B; this interaction mediates intracellular signaling as well as clearance of extracellular sPLA2-IB/PLA2G1B via endocytotic pathway. Interacts with sPLA2-X/PLA2G10; this interaction mediates sPLA2-X/PLA2G10 clearance and inactivation. Post-translationally, the secretory phospholipase A2 receptor form may be produced by the action of metalloproteinases. It contains all extracellular domains and only lacks transmembrane and cytosolic regions. It is however unclear whether this form is produced by proteolytic cleavage as suggested by some experiments reported by PubMed:11830583, or by alternative splicing. In terms of tissue distribution, widely expressed. Present in type II alveolar epithelial cells and a subset of splenic lymphocytes. Present at the surface of polymorphonuclear neutrophils (at protein level).

The protein resides in the cell membrane. Its subcellular location is the secreted. Its function is as follows. Receptor for secretory phospholipase A2 (sPLA2). Acts as a receptor for phospholipases sPLA2-IB/PLA2G1B, sPLA2-X/PLA2G10 and, with lower affinity, sPLA2-IIA/PLA2G2A. Also able to bind to snake PA2-like toxins. Although its precise function remains unclear, binding of sPLA2 to its receptor participates in both positive and negative regulation of sPLA2 functions as well as clearance of sPLA2. Binding of sPLA2-IB/PLA2G1B induces various effects depending on the cell type, such as activation of the mitogen-activated protein kinase (MAPK) cascade to induce cell proliferation, the production of lipid mediators, selective release of arachidonic acid in bone marrow-derived mast cells. In neutrophils, binding of sPLA2-IB/PLA2G1B can activate p38 MAPK to stimulate elastase release and cell adhesion. May be involved in responses in pro-inflammatory cytokine productions during endotoxic shock. Also has endocytic properties and rapidly internalizes sPLA2 ligands, which is particularly important for the clearance of extracellular sPLA2s to protect their potent enzymatic activities. The soluble secretory phospholipase A2 receptor form is circulating and acts as a negative regulator of sPLA2 functions by blocking the biological functions of sPLA2-IB/PLA2G1B and sPLA2-X/PLA2G10. In podocytes, binding of sPLA2-IB/PLA2G1B can regulate podocyte survival and glomerular homeostasis. This is Secretory phospholipase A2 receptor (Pla2r1) from Mus musculus (Mouse).